Here is a 376-residue protein sequence, read N- to C-terminus: Chorismate synthase (376 aa).

NADP(+) is bound by residues arginine 39 and arginine 45. FMN-binding positions include 115–117 (RSS), glycine 276, 291–295 (KPIPT), and arginine 317.

Belongs to the chorismate synthase family. Homotetramer. FMNH2 serves as cofactor.

It catalyses the reaction 5-O-(1-carboxyvinyl)-3-phosphoshikimate = chorismate + phosphate. Its pathway is metabolic intermediate biosynthesis; chorismate biosynthesis; chorismate from D-erythrose 4-phosphate and phosphoenolpyruvate: step 7/7. Catalyzes the anti-1,4-elimination of the C-3 phosphate and the C-6 proR hydrogen from 5-enolpyruvylshikimate-3-phosphate (EPSP) to yield chorismate, which is the branch point compound that serves as the starting substrate for the three terminal pathways of aromatic amino acid biosynthesis. This reaction introduces a second double bond into the aromatic ring system. The polypeptide is Chorismate synthase (Thermotoga sp. (strain RQ2)).